Here is a 747-residue protein sequence, read N- to C-terminus: ATP-dependent DNA helicase Hel308 (747 aa).

ATP-binding positions include Gln29 and 47–54; that span reads VPTASGKT. Residues 34–200 enclose the Helicase ATP-binding domain; the sequence is DAGVADGESL…WLDAELVDSS (167 aa). A DEAH box motif is present at residues 145 to 148; sequence DEVH. One can recognise a Helicase C-terminal domain in the interval 234-434; it reads PTEAVVRETL…REPSMRTHLL (201 aa). The tract at residues 711–747 is disordered; it reads AAGHQQPEMDGVTPDADVKESAAAAGTDDGQANLGDF.

This sequence belongs to the helicase family. Hel308 subfamily. In terms of assembly, monomer.

It carries out the reaction Couples ATP hydrolysis with the unwinding of duplex DNA by translocating in the 3'-5' direction.. It catalyses the reaction ATP + H2O = ADP + phosphate + H(+). In terms of biological role, DNA-dependent ATPase and 3'-5' DNA helicase that may be involved in repair of stalled replication forks. The sequence is that of ATP-dependent DNA helicase Hel308 from Natronomonas pharaonis (strain ATCC 35678 / DSM 2160 / CIP 103997 / JCM 8858 / NBRC 14720 / NCIMB 2260 / Gabara) (Halobacterium pharaonis).